Reading from the N-terminus, the 333-residue chain is MTFPRYILGIDTSCDDTGVGVVELAPDGSVQVRANRVWSQTVHAQYGGVLPELASREHVERIDTVTGDALAEAGLTVGDLAAVAATSGPGLVGALLVGLMYGKGLAQALNVPFYAAHHLEGHIFAAASEADLQAPYLALVVSGGHTHLFDVPREGEYVLVGATRDDAAGEAFDKVARLAGLGYPGGPAISEAARRGDPEAVPFKEPLQGQKGFDFSFSGLKTAALLAHRAGAKPEDLAAGFERAAVRFLVGTTLRAARAYGRETVVVSGGVAANRALREAFAASPVRAVFPGKGLNTDNGAMIALAGAAAIRAGRAPSPLSEGAVAYAPLASV.

Positions 118 and 122 each coordinate Fe cation. Substrate contacts are provided by residues 140–144 (VVSGG), Asp173, Gly186, and Asn274. Position 298 (Asp298) interacts with Fe cation.

The protein belongs to the KAE1 / TsaD family. Fe(2+) serves as cofactor.

The protein localises to the cytoplasm. The enzyme catalyses L-threonylcarbamoyladenylate + adenosine(37) in tRNA = N(6)-L-threonylcarbamoyladenosine(37) in tRNA + AMP + H(+). Its function is as follows. Required for the formation of a threonylcarbamoyl group on adenosine at position 37 (t(6)A37) in tRNAs that read codons beginning with adenine. Is involved in the transfer of the threonylcarbamoyl moiety of threonylcarbamoyl-AMP (TC-AMP) to the N6 group of A37, together with TsaE and TsaB. TsaD likely plays a direct catalytic role in this reaction. The chain is tRNA N6-adenosine threonylcarbamoyltransferase from Deinococcus geothermalis (strain DSM 11300 / CIP 105573 / AG-3a).